We begin with the raw amino-acid sequence, 413 residues long: Type IV pilus assembly protein TapC (413 aa).

The next 4 helical transmembrane spans lie at 180-200 (YPAM…LFVI), 227-247 (FMQH…FLYV), 286-306 (LSTT…AAGA), and 386-406 (IMVV…LPIF).

The protein belongs to the GSP F family.

The protein localises to the cell inner membrane. Functionally, involved in the translocation of the type IV pilin. The polypeptide is Type IV pilus assembly protein TapC (tapC) (Aeromonas hydrophila).